The primary structure comprises 129 residues: Small ribosomal subunit protein uS12 (129 aa).

Aspartate 89 carries the 3-methylthioaspartic acid modification. Residues 101–129 are disordered; it reads TLDTSGVSDRKQSRSKYGAKQPKAVAAKK.

The protein belongs to the universal ribosomal protein uS12 family. Part of the 30S ribosomal subunit. Contacts proteins S8 and S17. May interact with IF1 in the 30S initiation complex.

In terms of biological role, with S4 and S5 plays an important role in translational accuracy. Interacts with and stabilizes bases of the 16S rRNA that are involved in tRNA selection in the A site and with the mRNA backbone. Located at the interface of the 30S and 50S subunits, it traverses the body of the 30S subunit contacting proteins on the other side and probably holding the rRNA structure together. The combined cluster of proteins S8, S12 and S17 appears to hold together the shoulder and platform of the 30S subunit. The protein is Small ribosomal subunit protein uS12 of Chlorobium luteolum (strain DSM 273 / BCRC 81028 / 2530) (Pelodictyon luteolum).